A 160-amino-acid polypeptide reads, in one-letter code: Epithelial membrane protein 1 (160 aa).

A helical transmembrane segment spans residues 1-21; the sequence is MLVLLAAIFVVHIATCVMLFV. 2 N-linked (GlcNAc...) asparagine glycosylation sites follow: Asn-35 and Asn-43. 3 helical membrane-spanning segments follow: residues 67-87, 95-115, and 137-157; these read FMIL…FQLF, FFLS…GASI, and FILA…YLVL.

It belongs to the PMP-22/EMP/MP20 family. In terms of tissue distribution, most abundant in squamous epithelia.

The protein localises to the membrane. The protein is Epithelial membrane protein 1 (EMP1) of Oryctolagus cuniculus (Rabbit).